Reading from the N-terminus, the 370-residue chain is Phosphate acyltransferase (370 aa).

The protein belongs to the PlsX family. As to quaternary structure, homodimer. Probably interacts with PlsY.

The protein localises to the cytoplasm. The catalysed reaction is a fatty acyl-[ACP] + phosphate = an acyl phosphate + holo-[ACP]. The protein operates within lipid metabolism; phospholipid metabolism. In terms of biological role, catalyzes the reversible formation of acyl-phosphate (acyl-PO(4)) from acyl-[acyl-carrier-protein] (acyl-ACP). This enzyme utilizes acyl-ACP as fatty acyl donor, but not acyl-CoA. This is Phosphate acyltransferase from Paracoccus denitrificans (strain Pd 1222).